The primary structure comprises 250 residues: Shieldin complex subunit 3 (250 aa).

Positions 28–83 (QDFPTRPLSRFIPWFPYDGSKLPLRPKRSPPVISEEAAEDVKQYLTISEHDAKSHS) are sufficient for interaction with MAD2L2. Residues 108-119 (LKEQTNSGNLGK) show a composition bias toward polar residues. Positions 108 to 129 (LKEQTNSGNLGKQSEKGKQHKR) are disordered.

In terms of assembly, component of the shieldin complex, consisting of SHLD1, SHLD2, SHLD3 and MAD2L2/REV7. Within the complex, SHLD2 forms a scaffold which interacts with a SHLD3-MAD2L2 subcomplex via its N-terminus, and with SHLD1 via its C-terminus. Interacts with ASTE1.

The protein resides in the chromosome. In terms of biological role, component of the shieldin complex, which plays an important role in repair of DNA double-stranded breaks (DSBs). During G1 and S phase of the cell cycle, the complex functions downstream of TP53BP1 to promote non-homologous end joining (NHEJ) and suppress DNA end resection. Mediates various NHEJ-dependent processes including immunoglobulin class-switch recombination, and fusion of unprotected telomeres. The chain is Shieldin complex subunit 3 from Homo sapiens (Human).